Consider the following 362-residue polypeptide: Peptide chain release factor 1 (362 aa).

Q237 carries the post-translational modification N5-methylglutamine. The tract at residues 289–308 (AAEISDTRRNLLGSGDRSDR) is disordered.

It belongs to the prokaryotic/mitochondrial release factor family. In terms of processing, methylated by PrmC. Methylation increases the termination efficiency of RF1.

Its subcellular location is the cytoplasm. In terms of biological role, peptide chain release factor 1 directs the termination of translation in response to the peptide chain termination codons UAG and UAA. The protein is Peptide chain release factor 1 of Vibrio cholerae serotype O1 (strain ATCC 39541 / Classical Ogawa 395 / O395).